A 77-amino-acid polypeptide reads, in one-letter code: Large ribosomal subunit protein uL29 (77 aa).

It belongs to the universal ribosomal protein uL29 family.

This Corynebacterium urealyticum (strain ATCC 43042 / DSM 7109) protein is Large ribosomal subunit protein uL29.